A 196-amino-acid polypeptide reads, in one-letter code: Holliday junction branch migration complex subunit RuvA (196 aa).

Positions 1–63 are domain I; the sequence is MISFVSGRVA…EDSLTLYGFA (63 aa). The tract at residues 64 to 136 is domain II; sequence DDDERTVFEL…LKDRLGTPST (73 aa). Residues 136-140 form a flexible linker region; that stretch reads TAAAE. The segment at 141–196 is domain III; the sequence is STSGWRDAVHAGLLNLGYTARQADEAIAAIAGELDDSAAVDTATALRLALATLKRP.

This sequence belongs to the RuvA family. As to quaternary structure, homotetramer. Forms an RuvA(8)-RuvB(12)-Holliday junction (HJ) complex. HJ DNA is sandwiched between 2 RuvA tetramers; dsDNA enters through RuvA and exits via RuvB. An RuvB hexamer assembles on each DNA strand where it exits the tetramer. Each RuvB hexamer is contacted by two RuvA subunits (via domain III) on 2 adjacent RuvB subunits; this complex drives branch migration. In the full resolvosome a probable DNA-RuvA(4)-RuvB(12)-RuvC(2) complex forms which resolves the HJ.

Its subcellular location is the cytoplasm. Functionally, the RuvA-RuvB-RuvC complex processes Holliday junction (HJ) DNA during genetic recombination and DNA repair, while the RuvA-RuvB complex plays an important role in the rescue of blocked DNA replication forks via replication fork reversal (RFR). RuvA specifically binds to HJ cruciform DNA, conferring on it an open structure. The RuvB hexamer acts as an ATP-dependent pump, pulling dsDNA into and through the RuvAB complex. HJ branch migration allows RuvC to scan DNA until it finds its consensus sequence, where it cleaves and resolves the cruciform DNA. This chain is Holliday junction branch migration complex subunit RuvA, found in Acidothermus cellulolyticus (strain ATCC 43068 / DSM 8971 / 11B).